Reading from the N-terminus, the 457-residue chain is Histidine--tRNA ligase (457 aa).

It belongs to the class-II aminoacyl-tRNA synthetase family. In terms of assembly, homodimer.

The protein localises to the cytoplasm. The catalysed reaction is tRNA(His) + L-histidine + ATP = L-histidyl-tRNA(His) + AMP + diphosphate + H(+). The protein is Histidine--tRNA ligase of Mesoplasma florum (strain ATCC 33453 / NBRC 100688 / NCTC 11704 / L1) (Acholeplasma florum).